A 136-amino-acid chain; its full sequence is Small ribosomal subunit protein uS8c (136 aa).

This sequence belongs to the universal ribosomal protein uS8 family. As to quaternary structure, part of the 30S ribosomal subunit.

Its subcellular location is the plastid. It is found in the chloroplast. Functionally, one of the primary rRNA binding proteins, it binds directly to 16S rRNA central domain where it helps coordinate assembly of the platform of the 30S subunit. This is Small ribosomal subunit protein uS8c (rps8) from Saccharum officinarum (Sugarcane).